A 122-amino-acid chain; its full sequence is Large ribosomal subunit protein uL14 (122 aa).

This sequence belongs to the universal ribosomal protein uL14 family. In terms of assembly, part of the 50S ribosomal subunit. Forms a cluster with proteins L3 and L19. In the 70S ribosome, L14 and L19 interact and together make contacts with the 16S rRNA in bridges B5 and B8.

Functionally, binds to 23S rRNA. Forms part of two intersubunit bridges in the 70S ribosome. In Oenococcus oeni (strain ATCC BAA-331 / PSU-1), this protein is Large ribosomal subunit protein uL14.